The primary structure comprises 166 residues: Large ribosomal subunit protein uL10 (166 aa).

It belongs to the universal ribosomal protein uL10 family. As to quaternary structure, part of the ribosomal stalk of the 50S ribosomal subunit. The N-terminus interacts with L11 and the large rRNA to form the base of the stalk. The C-terminus forms an elongated spine to which L12 dimers bind in a sequential fashion forming a multimeric L10(L12)X complex.

In terms of biological role, forms part of the ribosomal stalk, playing a central role in the interaction of the ribosome with GTP-bound translation factors. In Pelagibacter ubique (strain HTCC1062), this protein is Large ribosomal subunit protein uL10.